Here is a 1099-residue protein sequence, read N- to C-terminus: Protein DDB_G0287365 (1099 aa).

The first 24 residues, 1–24, serve as a signal peptide directing secretion; it reads MMSFNLILILIIFLILIQNYVIDG. The 128-residue stretch at 47 to 174 folds into the G8 domain; sequence KSWKKLKLPI…TKTTWTKLIS (128 aa). N-linked (GlcNAc...) asparagine glycans are attached at residues Asn62, Asn137, Asn664, Asn764, and Asn858.

It belongs to the CEMIP family.

The protein is Protein DDB_G0287365 of Dictyostelium discoideum (Social amoeba).